An 89-amino-acid polypeptide reads, in one-letter code: MAKKSKIAKEKKRQKLVEQYAELRKELKEKGDYRALSKLPRDSAPARLHNRCEVTGRPRGYMRKFKMSRIAFRELAYKGQIPGVKKSSW.

The protein belongs to the universal ribosomal protein uS14 family. In terms of assembly, part of the 30S ribosomal subunit. Contacts proteins S3 and S10.

Functionally, binds 16S rRNA, required for the assembly of 30S particles and may also be responsible for determining the conformation of the 16S rRNA at the A site. In Bacillus licheniformis (strain ATCC 14580 / DSM 13 / JCM 2505 / CCUG 7422 / NBRC 12200 / NCIMB 9375 / NCTC 10341 / NRRL NRS-1264 / Gibson 46), this protein is Small ribosomal subunit protein uS14A.